The following is a 432-amino-acid chain: Enolase (432 aa).

Glutamine 167 provides a ligand contact to (2R)-2-phosphoglycerate. Glutamate 209 (proton donor) is an active-site residue. Mg(2+)-binding residues include aspartate 246, glutamate 290, and aspartate 317. Positions 342, 371, 372, and 393 each coordinate (2R)-2-phosphoglycerate. The active-site Proton acceptor is the lysine 342.

Belongs to the enolase family. As to quaternary structure, component of the RNA degradosome, a multiprotein complex involved in RNA processing and mRNA degradation. The cofactor is Mg(2+).

It localises to the cytoplasm. The protein resides in the secreted. It is found in the cell surface. It carries out the reaction (2R)-2-phosphoglycerate = phosphoenolpyruvate + H2O. Its pathway is carbohydrate degradation; glycolysis; pyruvate from D-glyceraldehyde 3-phosphate: step 4/5. In terms of biological role, catalyzes the reversible conversion of 2-phosphoglycerate (2-PG) into phosphoenolpyruvate (PEP). It is essential for the degradation of carbohydrates via glycolysis. The polypeptide is Enolase (Salmonella dublin (strain CT_02021853)).